We begin with the raw amino-acid sequence, 89 residues long: Large ribosomal subunit protein bL27 (89 aa).

A disordered region spans residues 1–21 (MAHKKAGGSSRNGRDSQSKRL).

The protein belongs to the bacterial ribosomal protein bL27 family.

In Rhizobium leguminosarum bv. trifolii (strain WSM2304), this protein is Large ribosomal subunit protein bL27.